The sequence spans 514 residues: 1-pyrroline-5-carboxylate dehydrogenase (514 aa).

Active-site residues include Glu-286 and Cys-320.

This sequence belongs to the aldehyde dehydrogenase family. RocA subfamily.

The catalysed reaction is L-glutamate 5-semialdehyde + NAD(+) + H2O = L-glutamate + NADH + 2 H(+). The protein operates within amino-acid degradation; L-proline degradation into L-glutamate; L-glutamate from L-proline: step 2/2. The sequence is that of 1-pyrroline-5-carboxylate dehydrogenase from Staphylococcus aureus (strain MRSA252).